The sequence spans 641 residues: Probable licABCH operon regulator (641 aa).

PRD domains lie at Ile184 to Gln289 and Ser296 to Glu403. Phosphohistidine; by HPr is present on residues His219, His278, His333, and His392. A PTS EIIB type-2 domain is found at Lys407–Asn498. Position 413 is a phosphocysteine; by EIIA (Cys413). Positions Arg499–Lys638 constitute a PTS EIIA type-2 domain. His559 is modified (phosphohistidine; by EIIB).

It belongs to the transcriptional antiterminator BglG family.

With respect to regulation, the regulatory activity of LicR is modulated by phosphorylation and dephosphorylation of the various LicR domains. It becomes activated via phosphoryl group transfer from PEP, EI and HPr on the two conserved histidine residues in the PRD 2 domain, whereas phosphorylation of the EIIA-like domain on His-559 by the PTS EIIB component LicB inactivates LicR. Its function is as follows. Positive regulator of the licABCH operon. This chain is Probable licABCH operon regulator (licR), found in Bacillus subtilis (strain 168).